Here is a 798-residue protein sequence, read N- to C-terminus: Nuclear intron maturase 4, mitochondrial (798 aa).

A mitochondrion-targeting transit peptide spans 1 to 16 (MFRKRNLVLDLLRRCY). Residues 578-665 (VVAPTNAIGR…AAKYRIHENE (88 aa)) form an intron maturase type-2 region. The THAP-type zinc finger occupies 729-778 (CFVIGCSMAAPAVYTLHAMERQKFPGWKTGFSVCIPSSLNGRRIGLCKQH).

This sequence belongs to the plant nuclear intron maturase (nMat) family.

The protein localises to the mitochondrion. It localises to the plastid. It is found in the chloroplast. Functionally, nuclear-encoded maturase required for splicing of group-II introns in mitochondria. Involved in NAD1 pre-mRNA processing and maturation of introns 1, 3 and 4. Necessary for mitochondrial biogenesis during early developmental stages. Essential for respiratory holocomplex I biogenesis in mitochondria. The sequence is that of Nuclear intron maturase 4, mitochondrial from Arabidopsis thaliana (Mouse-ear cress).